Consider the following 476-residue polypeptide: Transcription factor HBP-1b(c1) (476 aa).

3 disordered regions span residues 1 to 29 (ESRR…FGAP), 133 to 159 (HNND…PDID), and 171 to 207 (QLAA…RKSR). The span at 10 to 25 (AAAAAAAGDPRGPMPG) shows a compositional bias: low complexity. Polar residues predominate over residues 135-144 (NDNWGESSMA). Over residues 180 to 191 (SSDKSRDKLDHK) the composition is skewed to basic and acidic residues. The region spanning 189–252 (DHKSLRRLAQ…SSGDQSQSAS (64 aa)) is the bZIP domain. The interval 191 to 211 (KSLRRLAQNREAARKSRLRKK) is basic motif. Residues 201 to 242 (EAARKSRLRKKAYIQNLESSRLKLTQLEQELQRARQQGIFIS) are a coiled coil. A leucine-zipper region spans residues 217 to 231 (LESSRLKLTQLEQEL). Positions 256–473 (AVAFDMEYAR…RALSSLWLAR (218 aa)) constitute a DOG1 domain.

This sequence belongs to the bZIP family. In terms of assembly, binds DNA as a dimer.

The protein localises to the nucleus. Functionally, transcriptional activator that binds specifically to the DNA sequence 5'-TGACG-3'. Recognizes ocs elements like the as-1 motif of the cauliflower mosaic virus 35S promoter. Binding to the as-1-like cis elements mediate auxin- and salicylic acid-inducible transcription. Binds to the hexamer motif 5'-ACGTCA-3' of histone gene promoters. The polypeptide is Transcription factor HBP-1b(c1) (Triticum aestivum (Wheat)).